The following is a 106-amino-acid chain: Small ribosomal subunit protein uS10 (106 aa).

Belongs to the universal ribosomal protein uS10 family. As to quaternary structure, part of the 30S ribosomal subunit.

In terms of biological role, involved in the binding of tRNA to the ribosomes. The sequence is that of Small ribosomal subunit protein uS10 from Caldicellulosiruptor saccharolyticus (strain ATCC 43494 / DSM 8903 / Tp8T 6331).